Consider the following 102-residue polypeptide: Small ribosomal subunit protein uS10 (102 aa).

Belongs to the universal ribosomal protein uS10 family. In terms of assembly, part of the 30S ribosomal subunit.

Involved in the binding of tRNA to the ribosomes. The polypeptide is Small ribosomal subunit protein uS10 (Opitutus terrae (strain DSM 11246 / JCM 15787 / PB90-1)).